A 433-amino-acid chain; its full sequence is Serine/threonine-protein kinase STK11 (433 aa).

Residue Ser-31 is modified to Phosphoserine. Residues Lys-44 and Lys-48 each carry the N6-acetyllysine modification. Residues 45–90 are sufficient for interaction with SIRT1; it reads LIGKYLMGDLLGEGSYGKVKEVLDSETLCRRAVKILKKKKLRRIPN. Residues 49 to 309 enclose the Protein kinase domain; that stretch reads YLMGDLLGEG…IRQIRQHSWF (261 aa). Residues 55-63 and Lys-78 each bind ATP; that span reads LGEGSYGKV. N6-acetyllysine is present on residues Lys-96 and Lys-97. Catalysis depends on Asp-176, which acts as the Proton acceptor. Thr-189 carries the post-translational modification Phosphothreonine; by autocatalysis. 2 positions are modified to N6-acetyllysine: Lys-296 and Lys-311. Residues 312 to 331 form a disordered region; it reads KHPPAEAPVPIPPSPDTKDR. Over residues 316–326 the composition is skewed to pro residues; sequence AEAPVPIPPSP. Ser-325 is subject to Phosphoserine. Phosphothreonine; by autocatalysis is present on Thr-336. Residue Thr-363 is modified to Phosphothreonine; by ATM and autocatalysis. The interval 397 to 433 is disordered; the sequence is AAQLSTKSRAEGRAPNPARKACSASSKIRRLSACKQQ. Phosphoserine is present on residues Gln-399 and Ser-401. Residue Lys-416 is modified to N6-acetyllysine. Cys-418 is lipidated: S-palmitoyl cysteine. N6-acetyllysine is present on Lys-423. Residues 423 to 433 are compositionally biased toward basic residues; that stretch reads KIRRLSACKQQ. Residue Ser-428 is modified to Phosphoserine; by autocatalysis, PKA, PKC/PRKCZ and RPS6KA1. Residue Cys-430 is modified to Cysteine methyl ester. The S-farnesyl cysteine moiety is linked to residue Cys-430. Residue Lys-431 is modified to N6-acetyllysine. Positions 431–433 are cleaved as a propeptide — removed in mature form; the sequence is KQQ.

This sequence belongs to the protein kinase superfamily. CAMK Ser/Thr protein kinase family. LKB1 subfamily. As to quaternary structure, catalytic component of a trimeric complex composed of STK11/LKB1, STRAD (STRADA or STRADB) and CAB39/MO25 (CAB39/MO25alpha or CAB39L/MO25beta): the complex tethers STK11/LKB1 in the cytoplasm and stimulates its catalytic activity. Found in a ternary complex composed of SMAD4, STK11/LKB1 and STK11IP. Interacts with p53/TP53, SMAD4, STK11IP and WDR6. Interacts with NR4A1. Interacts with NISCH; this interaction may increase STK11 activity. Interacts with PTEN; leading to PTEN phosphorylation. Interacts with SIRT1; the interaction deacetylates STK11. Interacts with CDKN1A. Mg(2+) serves as cofactor. Requires Mn(2+) as cofactor. Phosphorylated by ATM at Thr-363 following ionizing radiation (IR). Phosphorylation at Ser-428 by RPS6KA1 and/or some PKA is required to inhibit cell growth. Phosphorylation at Ser-428 is also required during neuronal polarization to mediate phosphorylation of BRSK1 and BRSK2. Phosphorylation by PKC/PRKCZ at Ser-399 in isoform 2 promotes metformin (or peroxynitrite)-induced nuclear export of STK11 and activation of AMPK. UV radiation-induced phosphorylation at Thr-363 mediates CDKN1A degradation. In terms of processing, acetylated. Deacetylation at Lys-48 enhances cytoplasmic localization and kinase activity in vitro. In terms of tissue distribution, ubiquitously expressed. Strongest expression in testis and fetal liver.

The protein resides in the nucleus. It is found in the cytoplasm. It localises to the membrane. The protein localises to the mitochondrion. It carries out the reaction L-seryl-[protein] + ATP = O-phospho-L-seryl-[protein] + ADP + H(+). The enzyme catalyses L-threonyl-[protein] + ATP = O-phospho-L-threonyl-[protein] + ADP + H(+). Its activity is regulated as follows. Activated by forming a complex with STRAD (STRADA or STRADB) and CAB39/MO25 (CAB39/MO25alpha or CAB39L/MO25beta): STRADA (or STRADB)-binding promotes a conformational change of STK11/LKB1 in an active conformation, which is stabilized by CAB39/MO25alpha (or CAB39L/MO25beta) interacting with the STK11/LKB1 activation loop. Sequestration in the nucleus by NR4A1 prevents it from phosphorylating and activating cytoplasmic AMPK. Its function is as follows. Tumor suppressor serine/threonine-protein kinase that controls the activity of AMP-activated protein kinase (AMPK) family members, thereby playing a role in various processes such as cell metabolism, cell polarity, apoptosis and DNA damage response. Acts by phosphorylating the T-loop of AMPK family proteins, thus promoting their activity: phosphorylates PRKAA1, PRKAA2, BRSK1, BRSK2, MARK1, MARK2, MARK3, MARK4, NUAK1, NUAK2, SIK1, SIK2, SIK3 and SNRK but not MELK. Also phosphorylates non-AMPK family proteins such as STRADA, PTEN and possibly p53/TP53. Acts as a key upstream regulator of AMPK by mediating phosphorylation and activation of AMPK catalytic subunits PRKAA1 and PRKAA2 and thereby regulates processes including: inhibition of signaling pathways that promote cell growth and proliferation when energy levels are low, glucose homeostasis in liver, activation of autophagy when cells undergo nutrient deprivation, and B-cell differentiation in the germinal center in response to DNA damage. Also acts as a regulator of cellular polarity by remodeling the actin cytoskeleton. Required for cortical neuron polarization by mediating phosphorylation and activation of BRSK1 and BRSK2, leading to axon initiation and specification. Involved in DNA damage response: interacts with p53/TP53 and recruited to the CDKN1A/WAF1 promoter to participate in transcription activation. Able to phosphorylate p53/TP53; the relevance of such result in vivo is however unclear and phosphorylation may be indirect and mediated by downstream STK11/LKB1 kinase NUAK1. Also acts as a mediator of p53/TP53-dependent apoptosis via interaction with p53/TP53: translocates to the mitochondrion during apoptosis and regulates p53/TP53-dependent apoptosis pathways. Regulates UV radiation-induced DNA damage response mediated by CDKN1A. In association with NUAK1, phosphorylates CDKN1A in response to UV radiation and contributes to its degradation which is necessary for optimal DNA repair. Has a role in spermiogenesis. The polypeptide is Serine/threonine-protein kinase STK11 (Homo sapiens (Human)).